The sequence spans 440 residues: Probable exopolygalacturonase C (440 aa).

An N-terminal signal peptide occupies residues methionine 1 to glycine 19. Asparagine 82 and asparagine 99 each carry an N-linked (GlcNAc...) asparagine glycan. PbH1 repeat units follow at residues glycine 215–alanine 236, serine 238–serine 259, and threonine 265–arginine 288. The Proton donor role is filled by aspartate 229. The active site involves histidine 253. N-linked (GlcNAc...) asparagine glycosylation is found at asparagine 269, asparagine 301, asparagine 311, and asparagine 334. An intrachain disulfide couples cysteine 387 to cysteine 393. Asparagine 417 and asparagine 432 each carry an N-linked (GlcNAc...) asparagine glycan.

It belongs to the glycosyl hydrolase 28 family.

It localises to the secreted. The catalysed reaction is [(1-&gt;4)-alpha-D-galacturonosyl](n) + H2O = alpha-D-galacturonate + [(1-&gt;4)-alpha-D-galacturonosyl](n-1). Functionally, specific in hydrolyzing the terminal glycosidic bond of polygalacturonic acid and oligogalacturonates. This Aspergillus niger (strain ATCC MYA-4892 / CBS 513.88 / FGSC A1513) protein is Probable exopolygalacturonase C (pgxC).